Consider the following 95-residue polypeptide: Hge-scorpine (95 aa).

Residues 1-19 form the signal peptide; sequence MNTKLTVLCFLGIVTIVSC. Positions 55-94 constitute a BetaSPN-type CS-alpha/beta domain; it reads QFGCFANVDVKGDCKRHCKAEDKEGICHGTKCKCGVPISY. Intrachain disulfides connect C58/C81, C68/C86, and C72/C88.

Belongs to the long chain scorpion toxin family. Class 3 subfamily. Expressed by the venom gland.

The protein localises to the secreted. Functionally, has antibacterial activity against B.subtilis, but not against S.aureus. Also has hemolytic and cytolytic activities. Since cell lysis occurs at the tested concentrations, observation of activity on potassium channels is impossible. Its function is as follows. Blocks Kv1.1/KCNA1 (IC(50)=185 nM) potassium channels. Shows a weak hemolytic activity. In Hoffmannihadrurus gertschi (Scorpion), this protein is Hge-scorpine.